The chain runs to 304 residues: Putative dihydroorotate dehydrogenase A (fumarate) (304 aa).

Residues Ser-22 and 46 to 47 (KG) each bind FMN. Residues Lys-46 and 70–74 (NSVGL) contribute to the substrate site. FMN-binding residues include Asn-100 and Asn-128. A substrate-binding site is contributed by Asn-128. Cys-131 (nucleophile) is an active-site residue. The FMN site is built by Lys-166 and Val-192. Substrate is bound at residue 193 to 194 (NT). FMN contacts are provided by residues Gly-218, 244-245 (GG), and 266-267 (GT).

The protein belongs to the dihydroorotate dehydrogenase family. Type 1 subfamily. As to quaternary structure, homodimer. The cofactor is FMN.

It is found in the cytoplasm. It catalyses the reaction (S)-dihydroorotate + fumarate = orotate + succinate. It functions in the pathway pyrimidine metabolism; UMP biosynthesis via de novo pathway. In terms of biological role, catalyzes the conversion of dihydroorotate to orotate with fumarate as the electron acceptor. The polypeptide is Putative dihydroorotate dehydrogenase A (fumarate) (pyrD) (Solibacter usitatus (strain Ellin6076)).